We begin with the raw amino-acid sequence, 244 residues long: UPF0173 metal-dependent hydrolase Rcas_3617 (244 aa).

Belongs to the UPF0173 family.

In Roseiflexus castenholzii (strain DSM 13941 / HLO8), this protein is UPF0173 metal-dependent hydrolase Rcas_3617.